Consider the following 350-residue polypeptide: tRNA uridine(34) hydroxylase (350 aa).

In terms of domain architecture, Rhodanese spans 146–240; it reads DDPDALFIDM…YARKAREQGL (95 aa). Residue C200 is the Cysteine persulfide intermediate of the active site.

The protein belongs to the TrhO family.

The enzyme catalyses uridine(34) in tRNA + AH2 + O2 = 5-hydroxyuridine(34) in tRNA + A + H2O. Functionally, catalyzes oxygen-dependent 5-hydroxyuridine (ho5U) modification at position 34 in tRNAs, the first step in 5-carboxymethoxyuridine (cmo5U) biosynthesis. May be part of an alternate pathway, which is able to bypass cmo5U biogenesis in a subset of tRNAs under aerobic conditions. The protein is tRNA uridine(34) hydroxylase of Escherichia coli O127:H6 (strain E2348/69 / EPEC).